A 600-amino-acid polypeptide reads, in one-letter code: CTP synthase (600 aa).

In terms of domain architecture, Glutamine amidotransferase type-1 spans 304-570 (TIVLVGKYTH…IQSGEEVEWS (267 aa)). Active-site for GATase activity residues include C403, H532, and E534.

This sequence belongs to the CTP synthase family.

It carries out the reaction UTP + L-glutamine + ATP + H2O = CTP + L-glutamate + ADP + phosphate + 2 H(+). It functions in the pathway pyrimidine metabolism; CTP biosynthesis via de novo pathway; CTP from UDP: step 2/2. Functionally, catalyzes the ATP-dependent amination of UTP to CTP with either L-glutamine or ammonia as the source of nitrogen. The polypeptide is CTP synthase (ura7) (Schizosaccharomyces pombe (strain 972 / ATCC 24843) (Fission yeast)).